A 205-amino-acid chain; its full sequence is Adenylyl-sulfate kinase (205 aa).

Residue 31–38 (GLSGAGKS) coordinates ATP. Catalysis depends on Ser105, which acts as the Phosphoserine intermediate.

This sequence belongs to the APS kinase family.

It catalyses the reaction adenosine 5'-phosphosulfate + ATP = 3'-phosphoadenylyl sulfate + ADP + H(+). It participates in sulfur metabolism; hydrogen sulfide biosynthesis; sulfite from sulfate: step 2/3. Its function is as follows. Catalyzes the synthesis of activated sulfate. The chain is Adenylyl-sulfate kinase from Shewanella oneidensis (strain ATCC 700550 / JCM 31522 / CIP 106686 / LMG 19005 / NCIMB 14063 / MR-1).